Reading from the N-terminus, the 126-residue chain is Urease subunit beta (126 aa).

Belongs to the urease beta subunit family. As to quaternary structure, heterotrimer of UreA (gamma), UreB (beta) and UreC (alpha) subunits. Three heterotrimers associate to form the active enzyme.

It is found in the cytoplasm. It catalyses the reaction urea + 2 H2O + H(+) = hydrogencarbonate + 2 NH4(+). The protein operates within nitrogen metabolism; urea degradation; CO(2) and NH(3) from urea (urease route): step 1/1. The sequence is that of Urease subunit beta from Gloeothece citriformis (strain PCC 7424) (Cyanothece sp. (strain PCC 7424)).